A 371-amino-acid polypeptide reads, in one-letter code: Queuine tRNA-ribosyltransferase (371 aa).

The active-site Proton acceptor is the aspartate 89. Residues 89–93, aspartate 143, glutamine 185, and glycine 212 each bind substrate; that span reads DSGGF. The RNA binding stretch occupies residues 243–249; the sequence is GVGKPED. The active-site Nucleophile is the aspartate 262. The tract at residues 267 to 271 is RNA binding; important for wobble base 34 recognition; the sequence is TRNAR. Residues cysteine 300, cysteine 302, cysteine 305, and histidine 331 each coordinate Zn(2+).

The protein belongs to the queuine tRNA-ribosyltransferase family. In terms of assembly, homodimer. Within each dimer, one monomer is responsible for RNA recognition and catalysis, while the other monomer binds to the replacement base PreQ1. The cofactor is Zn(2+).

It catalyses the reaction 7-aminomethyl-7-carbaguanine + guanosine(34) in tRNA = 7-aminomethyl-7-carbaguanosine(34) in tRNA + guanine. It participates in tRNA modification; tRNA-queuosine biosynthesis. Functionally, catalyzes the base-exchange of a guanine (G) residue with the queuine precursor 7-aminomethyl-7-deazaguanine (PreQ1) at position 34 (anticodon wobble position) in tRNAs with GU(N) anticodons (tRNA-Asp, -Asn, -His and -Tyr). Catalysis occurs through a double-displacement mechanism. The nucleophile active site attacks the C1' of nucleotide 34 to detach the guanine base from the RNA, forming a covalent enzyme-RNA intermediate. The proton acceptor active site deprotonates the incoming PreQ1, allowing a nucleophilic attack on the C1' of the ribose to form the product. After dissociation, two additional enzymatic reactions on the tRNA convert PreQ1 to queuine (Q), resulting in the hypermodified nucleoside queuosine (7-(((4,5-cis-dihydroxy-2-cyclopenten-1-yl)amino)methyl)-7-deazaguanosine). In Azotobacter vinelandii (strain DJ / ATCC BAA-1303), this protein is Queuine tRNA-ribosyltransferase.